Here is a 275-residue protein sequence, read N- to C-terminus: Photosystem II extrinsic protein O (275 aa).

A signal peptide spans 1–28 (MRFRTLLIAFLALCLGLITACSEGPANA).

Belongs to the PsbO family. As to quaternary structure, PSII is composed of 1 copy each of membrane proteins PsbA, PsbB, PsbC, PsbD, PsbE, PsbF, PsbH, PsbI, PsbJ, PsbK, PsbL, PsbM, PsbT, PsbX, PsbY, PsbZ, Psb30/Ycf12, peripheral proteins PsbO, CyanoQ (PsbQ), PsbU, PsbV and a large number of cofactors. It forms dimeric complexes.

The protein resides in the cellular thylakoid membrane. One of the extrinsic, lumenal subunits of photosystem II (PSII), which stabilize and protect the oxygen-evolving complex. PSII is a light-driven water plastoquinone oxidoreductase, using light energy to abstract electrons from H(2)O, generating a proton gradient subsequently used for ATP formation. Required for dimerization of PSII and for binding of PsbQ to PSII. The chain is Photosystem II extrinsic protein O from Crocosphaera subtropica (strain ATCC 51142 / BH68) (Cyanothece sp. (strain ATCC 51142)).